A 1174-amino-acid chain; its full sequence is Probable DNA-directed RNA polymerase I subunit RPA2 (1174 aa).

A compositionally biased stretch (basic and acidic residues) spans 1–16 (MSFQTLERERTFKNPP). Residues 1–23 (MSFQTLERERTFKNPPKDGTSFP) are disordered. The segment at 1089–1118 (CRDCGSIISIMSTISMNGVGSASEVRCRSC) adopts a C4-type zinc-finger fold.

This sequence belongs to the RNA polymerase beta chain family. In terms of assembly, component of the RNA polymerase I (Pol I) complex consisting of 14 subunits.

Its subcellular location is the nucleus. The protein localises to the nucleolus. It catalyses the reaction RNA(n) + a ribonucleoside 5'-triphosphate = RNA(n+1) + diphosphate. In terms of biological role, DNA-dependent RNA polymerase catalyzes the transcription of DNA into RNA using the four ribonucleoside triphosphates as substrates. Second largest core component of RNA polymerase I which synthesizes ribosomal RNA precursors. Proposed to contribute to the polymerase catalytic activity and forms the polymerase active center together with the largest subunit. Pol I is composed of mobile elements and RPA2 is part of the core element with the central large cleft and probably a clamp element that moves to open and close the cleft. This Schizosaccharomyces pombe (strain 972 / ATCC 24843) (Fission yeast) protein is Probable DNA-directed RNA polymerase I subunit RPA2 (rpa2).